The primary structure comprises 227 residues: uncharacterized protein (227 aa).

The next 3 helical transmembrane spans lie at 109–128 (MCNV…FAGI), 173–192 (AILL…ILLT), and 199–221 (ALRV…VMMG).

The protein resides in the cell membrane. This is an uncharacterized protein from Archaeoglobus fulgidus (strain ATCC 49558 / DSM 4304 / JCM 9628 / NBRC 100126 / VC-16).